Here is a 292-residue protein sequence, read N- to C-terminus: Ribosomal protein L11 methyltransferase (292 aa).

Positions 138, 159, 181, and 225 each coordinate S-adenosyl-L-methionine.

It belongs to the methyltransferase superfamily. PrmA family.

It is found in the cytoplasm. It carries out the reaction L-lysyl-[protein] + 3 S-adenosyl-L-methionine = N(6),N(6),N(6)-trimethyl-L-lysyl-[protein] + 3 S-adenosyl-L-homocysteine + 3 H(+). Functionally, methylates ribosomal protein L11. The sequence is that of Ribosomal protein L11 methyltransferase from Leuconostoc citreum (strain KM20).